We begin with the raw amino-acid sequence, 102 residues long: MTENIDTANIDSMKHKTLKRTANRANKEVFFRRRKGCPLSAPDGTAPIITYKDPDLLSKFISECGRVLPARVTNVCRSKQRELTKAIKIARELALLPFVYHQ.

Belongs to the bacterial ribosomal protein bS18 family. As to quaternary structure, part of the 30S ribosomal subunit. Forms a tight heterodimer with protein bS6.

Functionally, binds as a heterodimer with protein bS6 to the central domain of the 16S rRNA, where it helps stabilize the platform of the 30S subunit. The chain is Small ribosomal subunit protein bS18 from Orientia tsutsugamushi (strain Ikeda) (Rickettsia tsutsugamushi).